We begin with the raw amino-acid sequence, 212 residues long: Large ribosomal subunit protein uL3 (212 aa).

The disordered stretch occupies residues 134–155 (RNSHGNSLSHRAPGSIGQNQSP). The residue at position 153 (glutamine 153) is an N5-methylglutamine.

Belongs to the universal ribosomal protein uL3 family. As to quaternary structure, part of the 50S ribosomal subunit. Forms a cluster with proteins L14 and L19. In terms of processing, methylated by PrmB.

Its function is as follows. One of the primary rRNA binding proteins, it binds directly near the 3'-end of the 23S rRNA, where it nucleates assembly of the 50S subunit. The sequence is that of Large ribosomal subunit protein uL3 from Pseudoalteromonas atlantica (strain T6c / ATCC BAA-1087).